Reading from the N-terminus, the 673-residue chain is MGFSHGVSKTLKSPKSLSLLRSYYSKFNPYPSIFGLNDHRFGLIKHDYCSNTRKENINPIDLSKYPTERIRNFSIIAHVDHGKSTLADRLLELTGTIKRGHGQPQYLDKLQVERERGITVKAQTATMFHKYNFHGPNIGDAHEPPTFLLNLIDTPGHVDFSYEVSRSLAACQGALLVVDAAQGVQAQTVANFYLAFESNLTVIPVINKIDQPTADPDRVKAQLKSMFDLEPSDCLLTSAKTGQGLEQVLPAVIERIPSPPGYSNSPLRMLLLDSYYDEYKGVICHVAVVDGMLRKGDKISSAATGHSYEILDVGFMHPELTPTGILLTGQVGYVVSGMRSTKEARVGDTLYHSRTSVEPLPGFKPAKHMVFSGLYPADGSDFDALNHAIERLTCNDASVSVTKESSSALGLGFRCGFLGLLHMDVFHQRLEQEYGAHVISTVPTVPYIFEYSDGSKVQVQNPAALPSNPKKRVTASWEPTVVATIIIPSEYVGPVITLCSERRGQQLEYSFIDSQRAFMKYRLPLREIVVDFYNELKSITSGYASFDYEDSEYQEAELVKLDILLNGQPVDAMATIVHNLKAQRVGRELVDKLKKFIDRQMFEITIQAAIGSKVVARETISAMRKNVLAKCYGGDVTRKRKLLEKQKEGKKRMKRVGSVDIPQEAFHELLKVS.

In terms of domain architecture, tr-type G spans 68–260; it reads ERIRNFSIIA…AVIERIPSPP (193 aa). GTP contacts are provided by residues 77-84, 153-157, and 207-210; these read AHVDHGKS, DTPGH, and NKID.

It belongs to the TRAFAC class translation factor GTPase superfamily. Classic translation factor GTPase family. LepA subfamily.

It is found in the mitochondrion inner membrane. It catalyses the reaction GTP + H2O = GDP + phosphate + H(+). In terms of biological role, promotes mitochondrial protein synthesis. May act as a fidelity factor of the translation reaction, by catalyzing a one-codon backward translocation of tRNAs on improperly translocated ribosomes. Binds to mitochondrial ribosomes in a GTP-dependent manner. The polypeptide is Translation factor GUF1 homolog, mitochondrial (Ricinus communis (Castor bean)).